The following is a 306-amino-acid chain: Pantothenate synthetase (306 aa).

37–44 (MGALHEGH) contributes to the ATP binding site. Histidine 44 functions as the Proton donor in the catalytic mechanism. Glutamine 69 provides a ligand contact to (R)-pantoate. Glutamine 69 serves as a coordination point for beta-alanine. An ATP-binding site is contributed by 155 to 158 (GEKD). Glutamine 161 contacts (R)-pantoate. ATP contacts are provided by residues valine 184 and 192–195 (KSSR).

Belongs to the pantothenate synthetase family. In terms of assembly, homodimer.

It localises to the cytoplasm. It catalyses the reaction (R)-pantoate + beta-alanine + ATP = (R)-pantothenate + AMP + diphosphate + H(+). The protein operates within cofactor biosynthesis; (R)-pantothenate biosynthesis; (R)-pantothenate from (R)-pantoate and beta-alanine: step 1/1. In terms of biological role, catalyzes the condensation of pantoate with beta-alanine in an ATP-dependent reaction via a pantoyl-adenylate intermediate. This chain is Pantothenate synthetase, found in Corynebacterium jeikeium (strain K411).